Reading from the N-terminus, the 71-residue chain is MTVLHVQEIRDMTPAEREAELDDLKTELLNARAVQAAGGAPENPGRIKELRKAIARIKTIQGEEGDLQENE.

It belongs to the universal ribosomal protein uL29 family. Part of the 50S ribosomal subunit. Interacts with protein L23.

Stabilizes the tertiary rRNA structure within the 23S rRNA domain (domain I) to which it binds. Located at the polypeptide exit tunnel on the outside of the subunit. In Haloarcula marismortui (strain ATCC 43049 / DSM 3752 / JCM 8966 / VKM B-1809) (Halobacterium marismortui), this protein is Large ribosomal subunit protein uL29 (rpl29).